We begin with the raw amino-acid sequence, 206 residues long: Fibroblast growth factor 4 (206 aa).

Residues methionine 1–alanine 29 form the signal peptide.

This sequence belongs to the heparin-binding growth factors family. Interacts with FGFR1, FGFR2, FGFR3 and FGFR4. Affinity between fibroblast growth factors (FGFs) and their receptors is increased by heparan sulfate glycosaminoglycans that function as coreceptors.

Its subcellular location is the secreted. Plays an important role in the regulation of embryonic development, cell proliferation, and cell differentiation. Required for normal limb and cardiac valve development during embryogenesis. May play a role in embryonic molar tooth bud development via inducing the expression of MSX1, MSX2 and MSX1-mediated expression of SDC1 in dental mesenchyme cells. The polypeptide is Fibroblast growth factor 4 (Bos taurus (Bovine)).